We begin with the raw amino-acid sequence, 235 residues long: MFQLGSLVVLCGLLIGTSESLLGDVANAVNNLDILNSPSEAVAQNLNLDVGSLQQATTWPSAKDSILETLNKVELGNSNGFTPLNGLLLRVNKFRVLDLQAGLSSNGKDIDLKLPLVFEISFSLPVIGPTLDVAVSLDLLNSVSVQTNAQTGLPGVTLGKCSGNTDKISISLLGRRLPFVNRILDGVSGLLTGAVSILLQNILCPVLQYLLSTMSGSAIQGLLSNVLTGQLAVPL.

The N-terminal stretch at 1–20 is a signal peptide; that stretch reads MFQLGSLVVLCGLLIGTSES. C161 and C204 are oxidised to a cystine.

This sequence belongs to the BPI/LBP/Plunc superfamily. Plunc family. As to expression, expressed in parotid, submandibular and sublingual glands.

The protein resides in the secreted. Functionally, has strong antibacterial activity against P.aeruginosa. The protein is BPI fold-containing family A member 2 (Bpifa2) of Rattus norvegicus (Rat).